A 245-amino-acid polypeptide reads, in one-letter code: tRNA pseudouridine synthase A (245 aa).

Aspartate 52 functions as the Nucleophile in the catalytic mechanism. Tyrosine 111 lines the substrate pocket.

The protein belongs to the tRNA pseudouridine synthase TruA family. In terms of assembly, homodimer.

The catalysed reaction is uridine(38/39/40) in tRNA = pseudouridine(38/39/40) in tRNA. In terms of biological role, formation of pseudouridine at positions 38, 39 and 40 in the anticodon stem and loop of transfer RNAs. This is tRNA pseudouridine synthase A from Rickettsia typhi (strain ATCC VR-144 / Wilmington).